The following is a 556-amino-acid chain: Trigger factor (556 aa).

The PPIase FKBP-type domain occupies 169 to 255; it reads GDVVVIDFAA…LREIKAKELP (87 aa). A compositionally biased stretch (polar residues) spans 438 to 452; sequence VDSEGNPTQAPTSLA. The segment at 438 to 556 is disordered; the sequence is VDSEGNPTQA…KPSKKDKKGK (119 aa). Acidic residues predominate over residues 461–472; that stretch reads PEAEFEADEPEA. 2 stretches are compositionally biased toward low complexity: residues 486-503 and 511-526; these read ETAT…AEAE and EASP…AEAT.

The protein belongs to the FKBP-type PPIase family. Tig subfamily.

The protein localises to the cytoplasm. The enzyme catalyses [protein]-peptidylproline (omega=180) = [protein]-peptidylproline (omega=0). Its function is as follows. Involved in protein export. Acts as a chaperone by maintaining the newly synthesized protein in an open conformation. Functions as a peptidyl-prolyl cis-trans isomerase. The protein is Trigger factor of Synechococcus sp. (strain JA-2-3B'a(2-13)) (Cyanobacteria bacterium Yellowstone B-Prime).